A 197-amino-acid polypeptide reads, in one-letter code: Probable deoxycytidylate deaminase (197 aa).

In terms of domain architecture, CMP/dCMP-type deaminase spans 49–183 (KKHQRFLRIA…KMLDHARLPY (135 aa)). Position 117 (histidine 117) interacts with Zn(2+). The Proton donor role is filled by glutamate 119. Zn(2+) is bound by residues cysteine 143 and cysteine 146.

This sequence belongs to the cytidine and deoxycytidylate deaminase family. Zn(2+) is required as a cofactor.

It carries out the reaction dCMP + H2O + H(+) = dUMP + NH4(+). In terms of biological role, supplies the nucleotide substrate for thymidylate synthetase. The polypeptide is Probable deoxycytidylate deaminase (Caenorhabditis elegans).